A 532-amino-acid chain; its full sequence is Probable 1,4-beta-D-glucan cellobiohydrolase B (532 aa).

The signal sequence occupies residues 1 to 26 (MLASTFSYRMYKTALILAALLGSGQA). Residues 27-461 (QQVGTSQAEV…SNIKVGPIGS (435 aa)) are catalytic. The active-site Nucleophile is the E238. E243 functions as the Proton donor in the catalytic mechanism. A glycan (N-linked (GlcNAc...) asparagine) is linked at N296. A disordered region spans residues 462 to 495 (TFNSGGSNPGGGTTTTTTTQPTTTTTTAGNPGGT). A thr-rich linker region spans residues 462–496 (TFNSGGSNPGGGTTTTTTTQPTTTTTTAGNPGGTG). Low complexity predominate over residues 475–490 (TTTTTTQPTTTTTTAG). Residues 496 to 532 (GVAQHYGQCGGIGWTGPTTCASPYTCQKLNDYYSQCL) form the CBM1 domain. Cystine bridges form between C504-C521 and C515-C531.

This sequence belongs to the glycosyl hydrolase 7 (cellulase C) family.

It localises to the secreted. The catalysed reaction is Hydrolysis of (1-&gt;4)-beta-D-glucosidic linkages in cellulose and cellotetraose, releasing cellobiose from the non-reducing ends of the chains.. Its function is as follows. The biological conversion of cellulose to glucose generally requires three types of hydrolytic enzymes: (1) Endoglucanases which cut internal beta-1,4-glucosidic bonds; (2) Exocellobiohydrolases that cut the disaccharide cellobiose from the non-reducing end of the cellulose polymer chain; (3) Beta-1,4-glucosidases which hydrolyze the cellobiose and other short cello-oligosaccharides to glucose. The polypeptide is Probable 1,4-beta-D-glucan cellobiohydrolase B (cbhB) (Aspergillus fumigatus (strain CBS 144.89 / FGSC A1163 / CEA10) (Neosartorya fumigata)).